Consider the following 426-residue polypeptide: Putative FBD-associated F-box protein At5g53635 (426 aa).

The F-box domain occupies 1-45 (MISQLPDPLICHILSHLPIKDLVTTRVLSTRWRSLWLWLPCLELN). The FBD domain occupies 353-405 (MIQFGSSLVPECLLSSLEFVDIRIPFRGHLEVMKLVRYFLENSAILKKLSLDH).

The polypeptide is Putative FBD-associated F-box protein At5g53635 (Arabidopsis thaliana (Mouse-ear cress)).